The chain runs to 89 residues: Neuropeptide S (89 aa).

An N-terminal signal peptide occupies residues Met1–Cys23. The propeptide occupies Tyr24–Val67.

The protein resides in the secreted. Modulates arousal and anxiety. May play an important anorexigenic role. Binds to its receptor NPSR1 with nanomolar affinity to increase intracellular calcium concentrations. In Homo sapiens (Human), this protein is Neuropeptide S (NPS).